The following is a 1616-amino-acid chain: Myosin-IIIa (1616 aa).

Residues Trp-21–Ile-287 form the Protein kinase domain. Residues Ile-27–Val-35 and Lys-50 each bind ATP. Asp-150 acts as the Proton acceptor in catalysis. The Myosin motor domain maps to Lys-338–Lys-1053. Residues Leu-934–Ser-956 are actin-binding. IQ domains are found at residues Ala-1055–Glu-1084, Arg-1082–Thr-1111, and Glu-1346–Lys-1375. An interaction with MORN4 region spans residues Glu-1401 to Ser-1479. Disordered regions lie at residues Leu-1545 to Leu-1567 and Ala-1581 to Ser-1616. Composition is skewed to basic and acidic residues over residues Gly-1550 to Gln-1564 and Ser-1583 to Pro-1592. Basic residues predominate over residues Leu-1602–Ser-1616.

In the C-terminal section; belongs to the TRAFAC class myosin-kinesin ATPase superfamily. Myosin family. This sequence in the N-terminal section; belongs to the protein kinase superfamily. STE Ser/Thr protein kinase family. In terms of assembly, interacts with MORN4. Interacts (via C-terminus) with ESPN and ESPNL. In terms of tissue distribution, strongest expression in retina, retinal pigment epithelial cells, cochlea and pancreas.

It localises to the cytoplasm. It is found in the cytoskeleton. The protein localises to the cell projection. The protein resides in the filopodium tip. Its subcellular location is the stereocilium. It carries out the reaction L-seryl-[protein] + ATP = O-phospho-L-seryl-[protein] + ADP + H(+). The enzyme catalyses L-threonyl-[protein] + ATP = O-phospho-L-threonyl-[protein] + ADP + H(+). It catalyses the reaction ATP + H2O = ADP + phosphate + H(+). In terms of biological role, actin-dependent motor protein with a protein kinase activity, playing an essential role in hearing. Probably also plays a role in vision. Required for normal cochlear hair bundle development and hearing. Plays an important role in the early steps of cochlear hair bundle morphogenesis. Influences the number and lengths of stereocilia to be produced and limits the growth of microvilli within the forming auditory hair bundles thereby contributing to the architecture of the hair bundle, including its staircase pattern. Involved in the elongation of actin in stereocilia tips by transporting the actin regulatory factor ESPN to the plus ends of actin filaments. This Homo sapiens (Human) protein is Myosin-IIIa (MYO3A).